We begin with the raw amino-acid sequence, 176 residues long: MINDTISDMLTRIRNASIVRKKSVLIPYTKMNLKIAEILEKEGYILSFEINTNKAISITKKTSETNLRMLKIYLKYYKKYKTNFYKLNVIKNKKALSDFKNLIKLLKGKQGNKKTPCITNLKRISKPGLRIYVNHKELPRVLAGTGIYILSTSKGILTDREARFRGIGGEVLCSVW.

It belongs to the universal ribosomal protein uS8 family. Part of the 30S ribosomal subunit.

The protein localises to the plastid. The protein resides in the chloroplast. In terms of biological role, one of the primary rRNA binding proteins, it binds directly to 16S rRNA central domain where it helps coordinate assembly of the platform of the 30S subunit. This chain is Small ribosomal subunit protein uS8c (rps8), found in Stigeoclonium helveticum (Green alga).